The sequence spans 102 residues: Large ribosomal subunit protein bL21 (102 aa).

It belongs to the bacterial ribosomal protein bL21 family. As to quaternary structure, part of the 50S ribosomal subunit. Contacts protein L20.

Functionally, this protein binds to 23S rRNA in the presence of protein L20. The sequence is that of Large ribosomal subunit protein bL21 from Exiguobacterium sp. (strain ATCC BAA-1283 / AT1b).